Here is a 267-residue protein sequence, read N- to C-terminus: Urease accessory protein UreD (267 aa).

The protein belongs to the UreD family. In terms of assembly, ureD, UreF and UreG form a complex that acts as a GTP-hydrolysis-dependent molecular chaperone, activating the urease apoprotein by helping to assemble the nickel containing metallocenter of UreC. The UreE protein probably delivers the nickel.

It is found in the cytoplasm. Its function is as follows. Required for maturation of urease via the functional incorporation of the urease nickel metallocenter. This is Urease accessory protein UreD from Synechococcus sp. (strain JA-2-3B'a(2-13)) (Cyanobacteria bacterium Yellowstone B-Prime).